Reading from the N-terminus, the 237-residue chain is Mitochondrial inner membrane protease atp23 (237 aa).

The segment covering 1–18 has biased composition (polar residues); sequence MSTSESSNNGSQPGNQDT. The segment at 1–24 is disordered; the sequence is MSTSESSNNGSQPGNQDTGYIPGD. His-136 is an a divalent metal cation binding site. The active site involves Glu-137. His-140 serves as a coordination point for a divalent metal cation.

Belongs to the peptidase M76 family.

Its subcellular location is the mitochondrion inner membrane. Functionally, has a dual role in the assembly of mitochondrial ATPase. Acts as a protease that removes N-terminal residues of mitochondrial ATPase CF(0) subunit 6 at the intermembrane space side. Also involved in the correct assembly of the membrane-embedded ATPase CF(0) particle, probably mediating association of subunit 6 with the subunit 9 ring. This chain is Mitochondrial inner membrane protease atp23 (atp23), found in Aspergillus niger (strain ATCC MYA-4892 / CBS 513.88 / FGSC A1513).